We begin with the raw amino-acid sequence, 972 residues long: Isoleucine--tRNA ligase (972 aa).

Positions 63-73 (PYANGNIHIGH) match the 'HIGH' region motif. An L-isoleucyl-5'-AMP-binding site is contributed by E603. The 'KMSKS' region motif lies at 644–648 (KMSKS). Residue K647 participates in ATP binding.

It belongs to the class-I aminoacyl-tRNA synthetase family. IleS type 1 subfamily. In terms of assembly, monomer.

It localises to the cytoplasm. The catalysed reaction is tRNA(Ile) + L-isoleucine + ATP = L-isoleucyl-tRNA(Ile) + AMP + diphosphate. Its function is as follows. Catalyzes the attachment of isoleucine to tRNA(Ile). As IleRS can inadvertently accommodate and process structurally similar amino acids such as valine, to avoid such errors it has two additional distinct tRNA(Ile)-dependent editing activities. One activity is designated as 'pretransfer' editing and involves the hydrolysis of activated Val-AMP. The other activity is designated 'posttransfer' editing and involves deacylation of mischarged Val-tRNA(Ile). The chain is Isoleucine--tRNA ligase from Brucella melitensis biotype 1 (strain ATCC 23456 / CCUG 17765 / NCTC 10094 / 16M).